The following is a 128-amino-acid chain: Early E3 14.5 kDa protein (128 aa).

Belongs to the adenoviridae E3_15 family.

Its function is as follows. Protects virus-infected cells from TNF-induced cytolysis. The chain is Early E3 14.5 kDa protein from Human adenovirus C serotype 5 (HAdV-5).